The primary structure comprises 548 residues: Calcium-transporting ATPase (548 aa).

The N-terminal stretch at 1–21 (MNFKSTVITAMCCFFSFAVLA) is a signal peptide. A divalent metal cation-binding residues include D37 and T78. Catalysis depends on T78, which acts as the Phosphothreonine intermediate. Substrate-binding positions include N99 and 160-162 (KDR). Residues 179 to 187 (DGKTGDWIT) carry the ATP-binding motif. A divalent metal cation-binding residues include D305, H309, D352, H353, and H488.

Mg(2+) serves as cofactor.

The protein localises to the cell inner membrane. It catalyses the reaction Ca(2+)(in) + ATP + H2O = Ca(2+)(out) + ADP + phosphate + H(+). With respect to regulation, completely inhibited by vanadate(3-). Also inhibited by lanthanoid atom and phosphate. Not inhibited by N-ethylmaleimide, 1,3-dicyclohexylcarbodiimide, oligomycin, ouabain, valinomycin, nigericin, thapsigargin, cyclopiazonic acid or fluorescein isothiocyanate. In terms of biological role, catalyzes the hydrolysis of ATP coupled with the transport of calcium. Has some hydrolysis activity also with dATP, GTP, UTP, ITP and 4-nitrophenyl phosphate as substrate. No activity with ADP, CTP, acetyl dihydrogen phosphate or AMP-PNP as substrate. This Myroides odoratus (Flavobacterium odoratum) protein is Calcium-transporting ATPase.